We begin with the raw amino-acid sequence, 786 residues long: DNA double-strand break repair Rad50 ATPase (786 aa).

Residues lysine 13, asparagine 33 to threonine 39, and glutamine 138 contribute to the ATP site. Coiled coils occupy residues leucine 194–isoleucine 249, glutamate 337–glutamate 455, and alanine 551–leucine 650. A Zinc-hook domain is found at glutamate 366 to glycine 459. Zn(2+)-binding residues include cysteine 411 and cysteine 414.

It belongs to the SMC family. RAD50 subfamily. Homodimer. Forms a heterotetramer composed of two Mre11 subunits and two Rad50 subunits. The cofactor is Zn(2+).

Part of the Rad50/Mre11 complex, which is involved in the early steps of DNA double-strand break (DSB) repair. The complex may facilitate opening of the processed DNA ends to aid in the recruitment of HerA and NurA. Rad50 controls the balance between DNA end bridging and DNA resection via ATP-dependent structural rearrangements of the Rad50/Mre11 complex. The protein is DNA double-strand break repair Rad50 ATPase of Nanoarchaeum equitans (strain Kin4-M).